A 305-amino-acid polypeptide reads, in one-letter code: Olfactory receptor 4F17 (305 aa).

The Extracellular portion of the chain corresponds to 1-18; the sequence is MVTEFIFLGLSDSQGLQT. The chain crosses the membrane as a helical span at residues 19 to 42; the sequence is FLFMLFFVFYGGIVFGNLLIVITV. Residues 43 to 50 lie on the Cytoplasmic side of the membrane; the sequence is VSDSHLHS. Residues 51 to 72 traverse the membrane as a helical segment; sequence PMYFLLANLSLIDLSLSSVTAP. Residues 73–93 lie on the Extracellular side of the membrane; the sequence is KMITDFFSQRKVISFKGCLVQ. C90 and C182 are joined by a disulfide. The chain crosses the membrane as a helical span at residues 94–113; the sequence is IFLLHFFGGSEMVILIAMGF. At 114–132 the chain is on the cytoplasmic side; sequence DRYIAICKPLHYTTIMCGN. The chain crosses the membrane as a helical span at residues 133 to 151; that stretch reads ACVGIMAVAWGIGFLHSVS. Residues 152 to 188 lie on the Extracellular side of the membrane; the sequence is QLAFAVHLPFCGPNEVDSFYCDLPRVIKLACTDTYRL. A helical transmembrane segment spans residues 189–212; the sequence is DIMVIANSGVLTVCSFVLLIISYT. The Cytoplasmic segment spans residues 213 to 228; it reads IILMTIQHRPLDKSSK. A helical membrane pass occupies residues 229–251; that stretch reads ALSTLTAHITVVLLFFGPCVFIY. Over 252–262 the chain is Extracellular; that stretch reads AWPFPIKSLDK. Residues 263–282 traverse the membrane as a helical segment; sequence FLAVFYSVITPLLNPIIYTL. Topologically, residues 283–305 are cytoplasmic; it reads RNKDMKTAIRQLRKWDAHSSVKF.

The protein belongs to the G-protein coupled receptor 1 family.

Its subcellular location is the cell membrane. Functionally, odorant receptor. The sequence is that of Olfactory receptor 4F17 (OR4F17) from Homo sapiens (Human).